The following is a 161-amino-acid chain: 3-isopropylmalate dehydratase small subunit (161 aa).

The protein belongs to the LeuD family. LeuD type 2 subfamily. Heterodimer of LeuC and LeuD.

The catalysed reaction is (2R,3S)-3-isopropylmalate = (2S)-2-isopropylmalate. Its pathway is amino-acid biosynthesis; L-leucine biosynthesis; L-leucine from 3-methyl-2-oxobutanoate: step 2/4. Functionally, catalyzes the isomerization between 2-isopropylmalate and 3-isopropylmalate, via the formation of 2-isopropylmaleate. This Caldanaerobacter subterraneus subsp. tengcongensis (strain DSM 15242 / JCM 11007 / NBRC 100824 / MB4) (Thermoanaerobacter tengcongensis) protein is 3-isopropylmalate dehydratase small subunit (leuD).